We begin with the raw amino-acid sequence, 375 residues long: Vasculin (375 aa).

2 disordered regions span residues 49 to 109 (SSDA…TSEI) and 356 to 375 (DSVQ…SDDE). The segment covering 96-108 (MKSQLHSENNTSE) has biased composition (polar residues). The segment covering 365–375 (TSSSSDTSDDE) has biased composition (low complexity).

It belongs to the vasculin family.

The protein resides in the nucleus. Functionally, functions as a GC-rich promoter-specific transactivating transcription factor. The chain is Vasculin (gpbp1) from Xenopus tropicalis (Western clawed frog).